The sequence spans 600 residues: Probable tripeptidyl-peptidase SED4 (600 aa).

A signal peptide spans 1–22 (MVSFTLRAIGACLIGLPALITA). The propeptide at 23-202 (APTSHVSNGF…SVFTSDLEMT (180 aa)) is removed in mature form. N-linked (GlcNAc...) asparagine glycosylation is found at Asn210 and Asn281. Residues 212–600 (TITPDCIREL…FEKLSKLVLI (389 aa)) form the Peptidase S53 domain. Residues Glu288 and Asp292 each act as charge relay system in the active site. N-linked (GlcNAc...) asparagine glycans are attached at residues Asn323 and Asn404. Ser504 (charge relay system) is an active-site residue. Ca(2+) is bound by residues Asp546, Ile547, Gly579, and Asp581.

The cofactor is Ca(2+).

It is found in the secreted. It localises to the extracellular space. The catalysed reaction is Release of an N-terminal tripeptide from a polypeptide.. Its function is as follows. Secreted tripeptidyl-peptidase which degrades proteins at acidic pHs and is involved in virulence. In Trichophyton verrucosum (strain HKI 0517), this protein is Probable tripeptidyl-peptidase SED4 (SED4).